The sequence spans 56 residues: Large ribosomal subunit protein bL32 (56 aa).

The segment at Met1–Gln26 is disordered. The span at Lys7–Arg16 shows a compositional bias: basic residues.

This sequence belongs to the bacterial ribosomal protein bL32 family.

The protein is Large ribosomal subunit protein bL32 of Shewanella baltica (strain OS155 / ATCC BAA-1091).